A 340-amino-acid chain; its full sequence is Glycerol-3-phosphate dehydrogenase [NAD(P)+] (340 aa).

Residues Ser-15, Tyr-16, His-36, and Lys-110 each coordinate NADPH. Residues Lys-110, Gly-139, and Thr-141 each contribute to the sn-glycerol 3-phosphate site. Position 143 (Ala-143) interacts with NADPH. Positions 195, 248, 258, 259, and 260 each coordinate sn-glycerol 3-phosphate. Lys-195 serves as the catalytic Proton acceptor. NADPH is bound at residue Arg-259. Val-283 and Glu-285 together coordinate NADPH.

Belongs to the NAD-dependent glycerol-3-phosphate dehydrogenase family.

The protein resides in the cytoplasm. The enzyme catalyses sn-glycerol 3-phosphate + NAD(+) = dihydroxyacetone phosphate + NADH + H(+). It carries out the reaction sn-glycerol 3-phosphate + NADP(+) = dihydroxyacetone phosphate + NADPH + H(+). The protein operates within membrane lipid metabolism; glycerophospholipid metabolism. Functionally, catalyzes the reduction of the glycolytic intermediate dihydroxyacetone phosphate (DHAP) to sn-glycerol 3-phosphate (G3P), the key precursor for phospholipid synthesis. The sequence is that of Glycerol-3-phosphate dehydrogenase [NAD(P)+] from Baumannia cicadellinicola subsp. Homalodisca coagulata.